A 239-amino-acid chain; its full sequence is Large ribosomal subunit protein uL3 (239 aa).

2 disordered regions span residues 140 to 166 (SHRSIGSTGGRQDPGKTWKNKKMPGHM) and 211 to 239 (PLPKEAPKPGKFKVAGEQAAEAPAVQEGA). The residue at position 151 (Gln151) is an N5-methylglutamine.

This sequence belongs to the universal ribosomal protein uL3 family. As to quaternary structure, part of the 50S ribosomal subunit. Forms a cluster with proteins L14 and L19. Methylated by PrmB.

In terms of biological role, one of the primary rRNA binding proteins, it binds directly near the 3'-end of the 23S rRNA, where it nucleates assembly of the 50S subunit. The protein is Large ribosomal subunit protein uL3 of Bradyrhizobium sp. (strain BTAi1 / ATCC BAA-1182).